A 360-amino-acid polypeptide reads, in one-letter code: Methionine import ATP-binding protein MetN (360 aa).

Positions 1–22 (MSHTASTPTPEEYSAQQPSTQG) are disordered. The 241-residue stretch at 25–265 (VEFRGITKVF…PQTQVAQKFV (241 aa)) folds into the ABC transporter domain. Position 62 to 69 (62 to 69 (GYSGAGKS)) interacts with ATP.

The protein belongs to the ABC transporter superfamily. Methionine importer (TC 3.A.1.24) family. The complex is composed of two ATP-binding proteins (MetN), two transmembrane proteins (MetI) and a solute-binding protein (MetQ).

It localises to the cell membrane. The catalysed reaction is L-methionine(out) + ATP + H2O = L-methionine(in) + ADP + phosphate + H(+). It carries out the reaction D-methionine(out) + ATP + H2O = D-methionine(in) + ADP + phosphate + H(+). Functionally, part of the ABC transporter complex MetNIQ involved in methionine import. Responsible for energy coupling to the transport system. This is Methionine import ATP-binding protein MetN from Corynebacterium glutamicum (strain ATCC 13032 / DSM 20300 / JCM 1318 / BCRC 11384 / CCUG 27702 / LMG 3730 / NBRC 12168 / NCIMB 10025 / NRRL B-2784 / 534).